The primary structure comprises 205 residues: DUF724 domain-containing protein 4 (205 aa).

The tract at residues 28-59 is disordered; it reads DASGRGKRRRVEQEHHSDLNNETAAPTGGSAG. The 127-residue stretch at 63–189 folds into the DUF724 domain; it reads VLPFTKTLAS…MADDYSKLKK (127 aa).

Expressed in roots, leaves, stems, flowers and siliques.

The protein resides in the nucleus. May be involved in the polar growth of plant cells via transportation of RNAs. This chain is DUF724 domain-containing protein 4, found in Arabidopsis thaliana (Mouse-ear cress).